A 367-amino-acid polypeptide reads, in one-letter code: Viral cathepsin (367 aa).

An N-terminal signal peptide occupies residues 1-25 (MRKYHSNIMHKIITFVSLLWTFVVC). A propeptide spans 26-156 (DEISLHTSSS…IVKGAPDIRL (131 aa)) (activation peptide). N-linked (GlcNAc...) asparagine; by host glycans are attached at residues Asn-103 and Asn-135. 3 disulfide bridges follow: Cys-177-Cys-218, Cys-211-Cys-251, and Cys-306-Cys-354. Cys-180 is an active-site residue. Active-site residues include His-313 and Asn-333.

It belongs to the peptidase C1 family. In terms of processing, synthesized as an inactive proenzyme and activated by proteolytic removal of the inhibitory propeptide.

The catalysed reaction is Endopeptidase of broad specificity, hydrolyzing substrates of both cathepsin L and cathepsin B.. Its function is as follows. Cysteine protease that plays an essential role in host liquefaction to facilitate horizontal transmission of the virus. May participate in the degradation of foreign protein expressed by the baculovirus system. In Lepidoptera (butterflies and moths), this protein is Viral cathepsin (VCATH).